A 729-amino-acid polypeptide reads, in one-letter code: uncharacterized protein (729 aa).

It belongs to the mimivirus L515/L516 family.

The protein resides in the virion. This is an uncharacterized protein from Acanthamoeba polyphaga mimivirus (APMV).